We begin with the raw amino-acid sequence, 118 residues long: UPF0102 protein RSal33209_1090 (118 aa).

Belongs to the UPF0102 family.

In Renibacterium salmoninarum (strain ATCC 33209 / DSM 20767 / JCM 11484 / NBRC 15589 / NCIMB 2235), this protein is UPF0102 protein RSal33209_1090.